The following is an 820-amino-acid chain: MGIHLGEIGIVLFPWFLWLSLFLSCGYAAITISSPLTLGQTLSSPGGFYELGFFSPNNSQNQYVGIWFKKITPRVVVWVANREKPITTPVANLTISRNGSLILLDSSKNVVWSTRRPSISNKCHAKLLDTGNLVIVDDVSENLLWQSFENPGDTMLPYSSLMYNLATGEKRVLSSWKSHTDPSPGDFVVRLTPQVPAQIVTMRGSSVYKRSGPWAKTGFTGVPLMDESYTSPFSLSQDVGNGTGLFSYLQRSSELTRVIITSEGYLKTFRYNGTGWVLDFITPANLCDLYGACGPFGLCVTSNPTKCKCMKGFVPKYKEEWKRGNMTSGCMRRTELSCQANLSTKTQGKGVDVFYRLANVKPPDLYEYASFVDADQCHQGCLSNCSCSAFAYITGIGCLLWNHELIDTIRYSVGGEFLSIRLASSELAGSRRTKIIVGSISLSIFVILAFGSYKYWRYRAKQNVGPTWAFFNNSQDSWKNGLEPQEISGLTFFEMNTIRAATNNFNVSNKLGQGGFGPVYKGTLSDKKDIAVKRLSSSSGQGTEEFMNEIKLISKLQHRNLVRLLGCCIDGEEKLLIYEFLVNKSLDTFLFDLTLKLQIDWPKRFNIIQGVSRGLLYLHRDSCMRVIHRDLKVSNILLDDKMNPKISDFGLARMFQGTQHQDNTRKVVGTLGYMSPEYAWTGMFSEKSDIYAFGVLLLEIISGKKISSFCCGEEGKTLLGHAWECWLETGGVDLLDEDISSSCSPVEVEVARCVQIGLLCIQQQAVDRPNIAQVVTMMTSATDLPRPKQPLFALQIQDQESVVSVSKSVNHVTQTEIYGR.

Positions 1–28 (MGIHLGEIGIVLFPWFLWLSLFLSCGYA) are cleaved as a signal peptide. A Bulb-type lectin domain is found at 29 to 148 (AITISSPLTL…VSENLLWQSF (120 aa)). The Extracellular segment spans residues 29–434 (AITISSPLTL…SELAGSRRTK (406 aa)). N-linked (GlcNAc...) asparagine glycans are attached at residues Asn57, Asn92, Asn98, Asn241, and Asn272. The 37-residue stretch at 283–319 (PANLCDLYGACGPFGLCVTSNPTKCKCMKGFVPKYKE) folds into the EGF-like domain. 2 disulfide bridges follow: Cys287/Cys299 and Cys293/Cys307. Residues Asn325, Asn341, and Asn384 are each glycosylated (N-linked (GlcNAc...) asparagine). A PAN domain is found at 338–422 (CQANLSTKTQ…VGGEFLSIRL (85 aa)). Disulfide bonds link Cys377-Cys398 and Cys381-Cys387. Residues 435-455 (IIVGSISLSIFVILAFGSYKY) form a helical membrane-spanning segment. Over 456–820 (WRYRAKQNVG…HVTQTEIYGR (365 aa)) the chain is Cytoplasmic. Residues 505–792 (FNVSNKLGQG…DLPRPKQPLF (288 aa)) enclose the Protein kinase domain. Residues 511–519 (LGQGGFGPV) and Lys533 contribute to the ATP site. Phosphoserine is present on residues Ser539 and Ser554. The segment at 594–611 (TLKLQIDWPKRFNIIQGV) is caM-binding. The active-site Proton acceptor is the Asp630. Residues Ser634 and Ser647 each carry the phosphoserine modification. Thr664 bears the Phosphothreonine mark. Residues Ser707, Ser708, and Ser808 each carry the phosphoserine modification. Thr815 is modified (phosphothreonine).

The protein belongs to the protein kinase superfamily. Ser/Thr protein kinase family.

It is found in the cell membrane. It catalyses the reaction L-seryl-[protein] + ATP = O-phospho-L-seryl-[protein] + ADP + H(+). It carries out the reaction L-threonyl-[protein] + ATP = O-phospho-L-threonyl-[protein] + ADP + H(+). The sequence is that of G-type lectin S-receptor-like serine/threonine-protein kinase At1g11280 from Arabidopsis thaliana (Mouse-ear cress).